The chain runs to 1086 residues: Ribonuclease 3 (1086 aa).

Disordered stretches follow at residues 1–77 (MSDE…DSPR) and 158–233 (CHSM…LRNF). Over residues 13–23 (PKHKRARRKKY) the composition is skewed to basic residues. A compositionally biased stretch (basic and acidic residues) spans 24–35 (QKEYQERHKEEM). Residues 43–53 (FQNQPSTSSAP) show a composition bias toward polar residues. Basic residues predominate over residues 159 to 168 (HSMKGRKTPK). The span at 181–190 (VSDDSNDSQD) shows a compositional bias: acidic residues. The segment covering 191–201 (EASTSEPTNRQ) has biased composition (polar residues). Positions 203–217 (PEADKTGEVKDEKQT) are enriched in basic and acidic residues. 2 RNase III domains span residues 607 to 781 (LDVF…LDGG) and 833 to 957 (FHAL…VDRG). Residues Glu694, Asn767, Glu770, Glu873, Asp943, and Glu946 each contribute to the Mg(2+) site. Residues 984–1059 (DAKSHLQQWC…AELALANLES (76 aa)) enclose the DRBM domain.

This sequence belongs to the ribonuclease III family. Mg(2+) serves as cofactor. Requires Mn(2+) as cofactor.

The protein localises to the nucleus. It carries out the reaction Endonucleolytic cleavage to 5'-phosphomonoester.. In terms of biological role, executes the initial step of microRNA (miRNA) processing in the nucleus, that is the cleavage of pri-miRNA to release pre-miRNA. Involved in pre-rRNA processing. Cleaves double-strand RNA and does not cleave single-strand RNA. Involved in fertility. Required for the function or synthesis of the let-7 miRNA. The sequence is that of Ribonuclease 3 (drsh-1) from Caenorhabditis elegans.